Reading from the N-terminus, the 294-residue chain is HTH-type transcriptional regulator XapR (294 aa).

The HTH lysR-type domain occupies 7-64 (TDLKLLRYFLAVAEELHFGRAAARLNMSQPPLSIHIKELENQLGTQLFIRHSRSVVLT). A DNA-binding region (H-T-H motif) is located at residues 24 to 43 (FGRAAARLNMSQPPLSIHIK).

This sequence belongs to the LysR transcriptional regulatory family.

Its function is as follows. Positive regulator required for the expression of xapA and xapB. Binds to the inducer xanthosine. The protein is HTH-type transcriptional regulator XapR (xapR) of Escherichia coli (strain K12).